Consider the following 276-residue polypeptide: uncharacterized protein (276 aa).

A signal peptide spans 1-25 (MNKKRLLPKASLGALFMLFGTALTA). Residue cysteine 26 is the site of N-palmitoyl cysteine attachment. Residue cysteine 26 is the site of S-diacylglycerol cysteine attachment.

The protein belongs to the MG439/MG440 family.

Its subcellular location is the cell membrane. This is an uncharacterized protein from Mycoplasma pneumoniae (strain ATCC 29342 / M129 / Subtype 1) (Mycoplasmoides pneumoniae).